A 394-amino-acid polypeptide reads, in one-letter code: MKKIVLAYSGGLDTSVILKWLQENYNCEVVVFTADIGQEDDMSVIQKKAAALNVKEIFIEDLKEEFVRDFVFPMFRANTIYEGYYLLGTSIARPLIAKRQIEIAHLTGADAVAHGATGKGNDQVRFEFGYYCCDPNIKVIAPWRQWELTSRHSLIEYARKNNINVPLDKVNEPPYSIDANLLHISYEGKSLEDPYVEPDYTMLSRSLTPELASSIPEYIEITFEQGDPIAINDIPLSPANLLHQLNKIGGKHGIGIVDIVENRYIGIKSRGIYETPGGTILLHAHRAIESITLDRESAHLKDEIMPKYAKLIYNGYWWTTERKMLQSLIDNHKKKFNGTVRIKLYKGSVVVVGRKSNNSLYSYNLASFDSESQGYDHKDAEGFIKVNSLRLKKS.

Residues alanine 7 to serine 15 and alanine 34 contribute to the ATP site. Positions 85 and 90 each coordinate L-citrulline. An ATP-binding site is contributed by glycine 115. Positions 117, 121, and 122 each coordinate L-aspartate. Residue asparagine 121 participates in L-citrulline binding. Residues arginine 125, serine 176, serine 185, glutamate 261, and tyrosine 273 each coordinate L-citrulline.

This sequence belongs to the argininosuccinate synthase family. Type 1 subfamily. In terms of assembly, homotetramer.

It localises to the cytoplasm. It carries out the reaction L-citrulline + L-aspartate + ATP = 2-(N(omega)-L-arginino)succinate + AMP + diphosphate + H(+). It functions in the pathway amino-acid biosynthesis; L-arginine biosynthesis; L-arginine from L-ornithine and carbamoyl phosphate: step 2/3. This chain is Argininosuccinate synthase, found in Ehrlichia ruminantium (strain Gardel).